We begin with the raw amino-acid sequence, 194 residues long: E3 ubiquitin-protein ligase RNF185 (194 aa).

Residues 1–32 (MASKGPTTSASTKSSSTGGTSGSSSSNGAGDN) form a disordered region. The segment at 31–82 (DNTNQDNTFECNICLDTAKDAVISLCGHLFCWPCLHQWLETRPNRQVCPVCK) is required for ubiquitin ligase activity and protection against ER stress-induced cell death. The RING-type zinc-finger motif lies at 41–82 (CNICLDTAKDAVISLCGHLFCWPCLHQWLETRPNRQVCPVCK). The interval 92-125 (PLYGRGSTGQQDPREKTPPRPQGQRPEPENRGGF) is disordered. 2 helical membrane-spanning segments follow: residues 133-153 (GGFQ…ATAF) and 174-194 (QFLS…LLIA).

It localises to the mitochondrion outer membrane. It is found in the endoplasmic reticulum membrane. It carries out the reaction S-ubiquitinyl-[E2 ubiquitin-conjugating enzyme]-L-cysteine + [acceptor protein]-L-lysine = [E2 ubiquitin-conjugating enzyme]-L-cysteine + N(6)-ubiquitinyl-[acceptor protein]-L-lysine.. It participates in protein modification; protein ubiquitination. Functionally, E3 ubiquitin-protein ligase that regulates selective mitochondrial autophagy by mediating 'Lys-63'-linked polyubiquitination. Acts in the endoplasmic reticulum (ER)-associated degradation (ERAD) pathway, which targets misfolded proteins that accumulate in the endoplasmic reticulum (ER) for ubiquitination and subsequent proteasome-mediated degradation. Protects cells from ER stress-induced apoptosis. Responsible for the cotranslational ubiquitination and degradation of CFTR in the ERAD pathway. Also acts as a regulator of the innate antiviral response by catalyzing 'Lys-27'-linked polyubiquitination of CGAS, thereby promoting CGAS cyclic GMP-AMP synthase activity. Preferentially associates with the E2 enzymes UBE2J1 and UBE2J2. The chain is E3 ubiquitin-protein ligase RNF185 (RNF185) from Gallus gallus (Chicken).